A 125-amino-acid polypeptide reads, in one-letter code: Ribonuclease P protein component (125 aa).

Belongs to the RnpA family. In terms of assembly, consists of a catalytic RNA component (M1 or rnpB) and a protein subunit.

It catalyses the reaction Endonucleolytic cleavage of RNA, removing 5'-extranucleotides from tRNA precursor.. Its function is as follows. RNaseP catalyzes the removal of the 5'-leader sequence from pre-tRNA to produce the mature 5'-terminus. It can also cleave other RNA substrates such as 4.5S RNA. The protein component plays an auxiliary but essential role in vivo by binding to the 5'-leader sequence and broadening the substrate specificity of the ribozyme. This Idiomarina loihiensis (strain ATCC BAA-735 / DSM 15497 / L2-TR) protein is Ribonuclease P protein component.